A 336-amino-acid polypeptide reads, in one-letter code: tRNA N6-adenosine threonylcarbamoyltransferase (336 aa).

Fe cation-binding residues include histidine 111 and histidine 115. Substrate-binding positions include leucine 134–glycine 138, aspartate 167, glycine 180, and asparagine 270. Residue aspartate 298 participates in Fe cation binding.

This sequence belongs to the KAE1 / TsaD family. It depends on Fe(2+) as a cofactor.

It is found in the cytoplasm. The enzyme catalyses L-threonylcarbamoyladenylate + adenosine(37) in tRNA = N(6)-L-threonylcarbamoyladenosine(37) in tRNA + AMP + H(+). Its function is as follows. Required for the formation of a threonylcarbamoyl group on adenosine at position 37 (t(6)A37) in tRNAs that read codons beginning with adenine. Is involved in the transfer of the threonylcarbamoyl moiety of threonylcarbamoyl-AMP (TC-AMP) to the N6 group of A37, together with TsaE and TsaB. TsaD likely plays a direct catalytic role in this reaction. In Acinetobacter baumannii (strain AB307-0294), this protein is tRNA N6-adenosine threonylcarbamoyltransferase.